Reading from the N-terminus, the 363-residue chain is NADH-quinone oxidoreductase subunit H (363 aa).

9 helical membrane-spanning segments follow: residues 62-82 (GPMYVGMGLFQAFADVFKLLF), 94-114 (AIFVIAPLLTLAPSFAAWAVV), 127-147 (VGLLYLLAMTSLGVYGIILAG), 166-186 (VVSYEIAMGFALVGVMIAAGS), 202-222 (FFDWFLIPLFPLFIVYWVSGV), 239-257 (IVAGHMVEYSGSVFALFFL), 264-286 (ILVSFLISIFFLGGWLSPIQGWV), 293-313 (LIDWVWNGGWPWLLFKVLFFA), and 339-359 (FIPLTIVWIAVTALMVFSGVI).

The protein belongs to the complex I subunit 1 family. NDH-1 is composed of 14 different subunits. Subunits NuoA, H, J, K, L, M, N constitute the membrane sector of the complex.

It is found in the cell inner membrane. It catalyses the reaction a quinone + NADH + 5 H(+)(in) = a quinol + NAD(+) + 4 H(+)(out). Its function is as follows. NDH-1 shuttles electrons from NADH, via FMN and iron-sulfur (Fe-S) centers, to quinones in the respiratory chain. The immediate electron acceptor for the enzyme in this species is believed to be ubiquinone. Couples the redox reaction to proton translocation (for every two electrons transferred, four hydrogen ions are translocated across the cytoplasmic membrane), and thus conserves the redox energy in a proton gradient. This subunit may bind ubiquinone. The chain is NADH-quinone oxidoreductase subunit H from Xylella fastidiosa (strain 9a5c).